Consider the following 148-residue polypeptide: MGLSAAQRQVVASTWKDIAGSDNGAGVGKECFTKFLSAHHDIAAVFGFSGASDPGVADLGAKVLAQIGVAVSHLGDEGKMVAEMKAVGVRHKGYGYKHIKAEYFEPLGASLLSAMEHRIGGKMTAAAKDAWAAAYADISGALISGLQS.

In terms of domain architecture, Globin spans 2–147 (GLSAAQRQVV…ISGALISGLQ (146 aa)). Residue His91 coordinates heme b.

In terms of assembly, monomer.

This chain is Globin, monomeric component M-IV, found in Glycera dibranchiata (Bloodworm).